Reading from the N-terminus, the 447-residue chain is Rab GDP dissociation inhibitor alpha (447 aa).

Belongs to the Rab GDI family. Interacts with RHOH. Interacts with the non-phosphorylated forms of RAB1A, RAB3A, RAB5A, RAB5B, RAB5C, RAB8A, RAB8B, RAB10, RAB12, RAB35, and RAB43.

The protein localises to the cytoplasm. It is found in the golgi apparatus. Its subcellular location is the trans-Golgi network. Functionally, regulates the GDP/GTP exchange reaction of most Rab proteins by inhibiting the dissociation of GDP from them, and the subsequent binding of GTP to them. Promotes the dissociation of GDP-bound Rab proteins from the membrane and inhibits their activation. Promotes the dissociation of RAB1A, RAB3A, RAB5A and RAB10 from membranes. The polypeptide is Rab GDP dissociation inhibitor alpha (GDI1) (Macaca fascicularis (Crab-eating macaque)).